Consider the following 429-residue polypeptide: Keratin, type I cytoskeletal 20 (429 aa).

The disordered stretch occupies residues 1–26 (MDFSRRSFHRSLSSSSQGPALSTSGS). The interval 1-74 (MDFSRRSFHR…SNGGDLFGGN (74 aa)) is head. Low complexity predominate over residues 10–26 (RSLSSSSQGPALSTSGS). Residues Ser13, Ser16, and Ser26 each carry the phosphoserine modification. Positions 75–110 (EKLAMQNLNDRLASYLEKVRSLEQSNSKLEAQIKQW) are coil 1A. The region spanning 75 to 386 (EKLAMQNLND…RLLEGEDIKT (312 aa)) is the IF rod domain. The tract at residues 111 to 128 (YETNAPSTIRDYSSYYAQ) is linker 1. Positions 129 to 220 (IKELQDQIKD…KEHQEEVEVL (92 aa)) are coil 1B. The linker 12 stretch occupies residues 221–243 (RRQLGNNVNVEVDAAPGLNLGEI). The coil 2 stretch occupies residues 244–382 (MNEMRQKYEI…ATYRRLLEGE (139 aa)). The segment at 383–429 (DIKTTEYQLNTLEAKDIKKTRKIKTVVEEVVDGKVVSSEVKEIEENI) is tail.

It belongs to the intermediate filament family. As to quaternary structure, heterotetramer of two type I and two type II keratins. Associates with KRT8. In terms of processing, hyperphosphorylation at Ser-13 occurs during the early stages of apoptosis but becomes less prominent during the later stages. Phosphorylation at Ser-13 also increases in response to stress brought on by cell injury. Proteolytically cleaved by caspases during apoptosis. Cleavage occurs at Asp-233. As to expression, expressed predominantly in the intestinal epithelium in differentiated villus cells.

In terms of biological role, plays a significant role in maintaining keratin filament organization in intestinal epithelia. When phosphorylated, plays a role in the secretion of mucin in the small intestine. The polypeptide is Keratin, type I cytoskeletal 20 (Krt20) (Rattus norvegicus (Rat)).